The following is a 496-amino-acid chain: Pyrrole-2-carboxylic acid decarboxylase (496 aa).

Tryptophan 166 is a binding site for K(+). Residues valine 168, arginine 170, glutamine 187, and histidine 188 each coordinate prenylated FMN. Position 188 (histidine 188) interacts with Mn(2+). K(+)-binding residues include alanine 218, alanine 219, methionine 221, and glutamate 229. Residue glutamate 229 coordinates prenylated FMN. Mn(2+) is bound at residue glutamate 229. Residue glutamate 278 is the Proton donor of the active site. Histidine 386 serves as a coordination point for prenylated FMN.

The protein belongs to the UbiD family. UbiD-like/FDC subfamily. Homodimer. It depends on prenylated FMN as a cofactor. The cofactor is Mn(2+). K(+) is required as a cofactor.

It catalyses the reaction pyrrole-2-carboxylate + H(+) = 1H-pyrrole + CO2. The catalysed reaction is pyrrole-2-carboxylate + H2O = 1H-pyrrole + hydrogencarbonate. Imidazole acts as a reversible inhibitor via the formation of an imidazole-prenyl-FMN adduct. Activity is light sensitive. Functionally, catalyzes the prenyl-FMN-dependent decarboxylation of pyrrole-2-carboxylate (P2C). Can also catalyze the carboxylation of pyrrole in the presence of elevated concentrations of CO(2) or bicarbonate. Can accept a modest range of heteroaromatic compounds such as 3-methylpyrrole-2-carboxylate, indole-3-carboxylate and furan-2-carboxylate, and shows very low activity with thiophene-2-carboxylate. Attenuates the virulence of P.aeruginosa in a Drosophila model when overexpressed. The polypeptide is Pyrrole-2-carboxylic acid decarboxylase (Pseudomonas aeruginosa (strain ATCC 15692 / DSM 22644 / CIP 104116 / JCM 14847 / LMG 12228 / 1C / PRS 101 / PAO1)).